Consider the following 197-residue polypeptide: Probable nicotinate-nucleotide adenylyltransferase (197 aa).

Belongs to the NadD family.

It carries out the reaction nicotinate beta-D-ribonucleotide + ATP + H(+) = deamido-NAD(+) + diphosphate. It participates in cofactor biosynthesis; NAD(+) biosynthesis; deamido-NAD(+) from nicotinate D-ribonucleotide: step 1/1. In terms of biological role, catalyzes the reversible adenylation of nicotinate mononucleotide (NaMN) to nicotinic acid adenine dinucleotide (NaAD). The chain is Probable nicotinate-nucleotide adenylyltransferase from Bordetella pertussis (strain Tohama I / ATCC BAA-589 / NCTC 13251).